A 100-amino-acid chain; its full sequence is MAEMITEAAILTQQAAQFDQIASGLSQERNFVDSIGQSFQNTWEGQAASAALGALGRFDEAMQDQIRQLESIVDKLNRSGGNYTKTDDEANQLLSSKMNF.

This sequence belongs to the WXG100 family. CFP-10 subfamily. Forms a tight 1:1 complex with EsxA.

It is found in the secreted. A secreted protein that might play a role in virulence. Might serve as a chaperone to prevent uncontrolled membrane lysis by its partner EsxA. In Mycobacterium leprae (strain TN), this protein is ESAT-6-like protein EsxB (esxB).